The sequence spans 475 residues: Solute carrier family 46 member 2 (475 aa).

At 1-23 (MSPEVTCPRRGHLPRFHPRTWVE) the chain is on the cytoplasmic side. The chain crosses the membrane as a helical span at residues 24–44 (PVVASSQVAASLYDAGLLLVV). Residues 45–78 (KASYGTGGSSNHSASPSPRGALEDQQQRAISNFY) are Extracellular-facing. The N-linked (GlcNAc...) asparagine glycan is linked to asparagine 55. The chain crosses the membrane as a helical span at residues 79-99 (IIYNLVVGLSPLLSAYGLGWL). The Cytoplasmic portion of the chain corresponds to 100-108 (SDRYHRKIS). Residues 109 to 129 (ICMSLLGFLLSRLGLLLKVLL) traverse the membrane as a helical segment. Residues 130–138 (DWPVEVLYG) are Extracellular-facing. A helical transmembrane segment spans residues 139–159 (AAALNGLFGGFSAFWSGVMAL). Residues 160–172 (GSLGSSEGRRSVR) are Cytoplasmic-facing. Residues 173–193 (LILIDLMLGLAGFCGSMASGH) traverse the membrane as a helical segment. Over 194–205 (LFKQMAGHSGQG) the chain is Extracellular. The chain crosses the membrane as a helical span at residues 206 to 226 (LILTACSVSCASFALLYSLLV). Over 227 to 282 (LKVPESVAKPSQELPAVDTVSGTVGTYRTLDPDQLDQQYAVGHPPSPGKAKPHKTT) the chain is Cytoplasmic. Residues 283-303 (IALLFVGAIIYDLAVVGTVDV) traverse the membrane as a helical segment. At 304–320 (IPLFVLREPLGWNQVQV) the chain is on the extracellular side. A helical transmembrane segment spans residues 321–341 (GYGMAAGYTIFITSFLGVLVF). The Cytoplasmic portion of the chain corresponds to 342–347 (SRCFRD). A helical transmembrane segment spans residues 348–368 (TTMIMIGMVSFGSGALLLAFV). Residues 369–370 (KE) are Extracellular-facing. The helical transmembrane segment at 371–391 (TYMFYIARAVMLFALIPVTTI) threads the bilayer. Residues 392-406 (RSAMSKLIKGSSYGK) are Cytoplasmic-facing. Residues 407-427 (VFVILQLSLALTGVVTSTLYN) traverse the membrane as a helical segment. At 428–435 (KIYQLTMD) the chain is on the extracellular side. The chain crosses the membrane as a helical span at residues 436–456 (MFVGSCFALSSFLSFLAIIPI). The Cytoplasmic portion of the chain corresponds to 457 to 475 (SIVAYKQVPLSPYGDIIEK).

Belongs to the major facilitator superfamily. SLC46A family. In terms of processing, glycosylated. As to expression, strongly expressed in the adult thymus. Expressed in spleen, lymph nodes, thymus, PBL, bone marrow and fetal liver. Expressed in monocytes and pre-dendridic cells.

The protein localises to the endosome membrane. It localises to the cell membrane. It catalyses the reaction N-acetyl-beta-D-glucosaminyl-(1-&gt;4)-1,6-anhydro-N-acetyl-beta-D-muramoyl-L-alanyl-gamma-D-glutamyl-meso-2,6-diaminopimeloyl-D-alanine(out) + n H(+)(out) = N-acetyl-beta-D-glucosaminyl-(1-&gt;4)-1,6-anhydro-N-acetyl-beta-D-muramoyl-L-alanyl-gamma-D-glutamyl-meso-2,6-diaminopimeloyl-D-alanine(in) + n H(+)(in). The enzyme catalyses L-alanyl-gamma-D-glutamyl-meso-2,6-diaminopimelate(out) + n H(+)(out) = L-alanyl-gamma-D-glutamyl-meso-2,6-diaminopimelate(in) + n H(+)(in). The catalysed reaction is N-acetyl-D-muramoyl-L-alanyl-D-isoglutamine(out) + n H(+)(out) = N-acetyl-D-muramoyl-L-alanyl-D-isoglutamine(in) + n H(+)(in). It carries out the reaction 2',3'-cGAMP(out) + n H(+)(out) = 2',3'-cGAMP(in) + n H(+)(in). It catalyses the reaction 3',3'-cGAMP(out) + n H(+)(out) = 3',3'-cGAMP(in) + n H(+)(in). In terms of biological role, proton-coupled transporter that delivers pathogen-associated or danger-associated molecular patterns to cytosolic pattern recognition receptors as part of the innate immune response to microbes or tissue injury. Has selectivity toward muropeptides that contain the amino acid diaminopimelic acid (DAP-type peptidoglycan muropeptides) including Tri-DAP and tracheal toxin (TCT), common in Gram-negative bacteria and Gram-positive bacilli. In the context of immune recognition of skin microbiota, shuttles bacterial muropeptides across the endolysosomal membranes into the cytosol for recognition by NOD1, triggering MYD88-dependent secretion of IL1A and neutrophil recruitment in a pyroptosis-type inflammatory process. To a lesser extent and redundantly, transports muramyl dipeptides derived from most bacterial proteoglycans, eliciting NOD2 receptor activation and downstream inflammatory responses. Postulated to function as a dominant importer of cyclic GMP-AMP dinucleotides (cGAMPs) in monocyte and macrophage cell lineages. Selectively imports cGAMPs derived from pathogenic bacteria such as 3'3'-cGAMP thus providing for differential immune recognition of pathogenic versus commensal bacteria. During tumorigenesis may transport extracellular tumor-derived 2'3'-cGAMP across the plasma membrane of M1-polarized macrophages to activate the anti-tumoral stimulator of interferon genes (STING) pathway. The transport mechanism, its electrogenicity and stoichiometry remain to be elucidated. In Homo sapiens (Human), this protein is Solute carrier family 46 member 2.